We begin with the raw amino-acid sequence, 122 residues long: Large ribosomal subunit protein uL14 (122 aa).

Belongs to the universal ribosomal protein uL14 family. As to quaternary structure, part of the 50S ribosomal subunit. Forms a cluster with proteins L3 and L19. In the 70S ribosome, L14 and L19 interact and together make contacts with the 16S rRNA in bridges B5 and B8.

Its function is as follows. Binds to 23S rRNA. Forms part of two intersubunit bridges in the 70S ribosome. The polypeptide is Large ribosomal subunit protein uL14 (Desulfosudis oleivorans (strain DSM 6200 / JCM 39069 / Hxd3) (Desulfococcus oleovorans)).